A 460-amino-acid polypeptide reads, in one-letter code: Probable amino acid transporter skat-1 (460 aa).

10 consecutive transmembrane segments (helical) span residues L64–G84, F132–I152, M172–M192, I194–M214, T236–I256, F270–F290, V316–Y336, G362–E382, I383–F403, and I426–T446.

The protein belongs to the amino acid/polyamine transporter 2 family. As to expression, expressed in the head, tail, body and ventral nerve cord neurons, muscles of the vulva, and intestine.

The protein localises to the membrane. It localises to the cytoplasmic granule. Its function is as follows. Plays a role in the accumulation of vital dyes and endogenous fluorescent compounds in lysosome related organelles. Has an effect on lysosome related organelle (LRO) function, in a pathway with serotonin. This is Probable amino acid transporter skat-1 from Caenorhabditis elegans.